The primary structure comprises 329 residues: Methionyl-tRNA formyltransferase (329 aa).

117 to 120 contacts (6S)-5,6,7,8-tetrahydrofolate; sequence SLLP.

It belongs to the Fmt family.

The enzyme catalyses L-methionyl-tRNA(fMet) + (6R)-10-formyltetrahydrofolate = N-formyl-L-methionyl-tRNA(fMet) + (6S)-5,6,7,8-tetrahydrofolate + H(+). Functionally, attaches a formyl group to the free amino group of methionyl-tRNA(fMet). The formyl group appears to play a dual role in the initiator identity of N-formylmethionyl-tRNA by promoting its recognition by IF2 and preventing the misappropriation of this tRNA by the elongation apparatus. The sequence is that of Methionyl-tRNA formyltransferase from Paracidovorax citrulli (strain AAC00-1) (Acidovorax citrulli).